The following is a 142-amino-acid chain: Fusaric acid resistance protein FusB (142 aa).

Residues 73-142 (AAPCSRKAST…ASCSPAIRPR (70 aa)) are disordered. The segment covering 81 to 142 (STGSPARSSG…ASCSPAIRPR (62 aa)) has biased composition (low complexity).

Its function is as follows. Involved in the resistance (detoxification) of the fungal toxin fusaric acid. This is Fusaric acid resistance protein FusB (fusB) from Burkholderia cepacia (Pseudomonas cepacia).